A 193-amino-acid polypeptide reads, in one-letter code: Thioredoxin M4, chloroplastic (193 aa).

The transit peptide at 1 to 82 (MASLLDSVTV…RIACEAQDTT (82 aa)) directs the protein to the chloroplast. Positions 83–192 (AAAVEVPNLS…LEKTIERFLV (110 aa)) constitute a Thioredoxin domain. Residues C116 and C119 each act as nucleophile in the active site. Residues C116 and C119 are joined by a disulfide bond.

The protein belongs to the thioredoxin family. Plant M-type subfamily.

The protein resides in the plastid. Its subcellular location is the chloroplast stroma. Thiol-disulfide oxidoreductase involved in the redox regulation of enzyme of the oxidative pentose phosphate pathway. Under reducing conditions, inhibits the glucose-6-phosphate dehydrogenase. The sequence is that of Thioredoxin M4, chloroplastic from Arabidopsis thaliana (Mouse-ear cress).